Here is a 528-residue protein sequence, read N- to C-terminus: ATP synthase subunit alpha (528 aa).

169-176 (GDRQTGKT) is a binding site for ATP.

It belongs to the ATPase alpha/beta chains family. F-type ATPases have 2 components, CF(1) - the catalytic core - and CF(0) - the membrane proton channel. CF(1) has five subunits: alpha(3), beta(3), gamma(1), delta(1), epsilon(1). CF(0) has three main subunits: a(1), b(2) and c(9-12). The alpha and beta chains form an alternating ring which encloses part of the gamma chain. CF(1) is attached to CF(0) by a central stalk formed by the gamma and epsilon chains, while a peripheral stalk is formed by the delta and b chains.

Its subcellular location is the cell membrane. The enzyme catalyses ATP + H2O + 4 H(+)(in) = ADP + phosphate + 5 H(+)(out). In terms of biological role, produces ATP from ADP in the presence of a proton gradient across the membrane. The alpha chain is a regulatory subunit. The polypeptide is ATP synthase subunit alpha (Mycoplasmopsis agalactiae (strain NCTC 10123 / CIP 59.7 / PG2) (Mycoplasma agalactiae)).